Consider the following 606-residue polypeptide: Calmegin (606 aa).

The signal sequence occupies residues 1-19 (MRFQGFWLCLGLLFISVNA). The Lumenal portion of the chain corresponds to 20–466 (EFMDDSVEME…QLMSATEQRP (447 aa)). At Lys-124 the chain carries N6-acetyllysine. A disulfide bridge connects residues Cys-147 and Cys-181. Residues 255-308 (PPINPPKEIEDPTDEKPDDWDERAKIPDASAVKPEDWDESEPPQIVDSSAVKPD) are disordered. 8 repeat units span residues 263–276 (IEDP…DWDE), 280–293 (IPDA…DWDE), 299–312 (IVDS…GWLD), 318–331 (IPDP…DWNE), 335–348 (GEWE…PACR), 352–365 (GEWS…PKYK), 366–379 (GIWR…PNYQ), and 380–393 (GIWS…PDYF). The span at 265–275 (DPTDEKPDDWD) shows a compositional bias: acidic residues. Residues 313-346 (NEPEFIPDPNAEKPFDWNEDMDGEWEAPHISNPA) form an interaction with PPIB region. An intrachain disulfide couples Cys-347 to Cys-351. Residues 467–487 (WLWFIYLLTAALPIALIGSFC) form a helical membrane-spanning segment. At 488–606 (WPRKVKKKYE…SVRKRRVRKE (119 aa)) the chain is on the cytoplasmic side. A compositionally biased stretch (basic and acidic residues) spans 518 to 544 (EVKEEKAALEKPVDLEEEKKQSDGEIV). The segment at 518 to 606 (EVKEEKAALE…SVRKRRVRKE (89 aa)) is disordered. Positions 545–567 (EKEEEGEPEEKSEEEIEIIEGQE) are enriched in acidic residues. Phosphoserine is present on residues Ser-556, Ser-572, Ser-575, Ser-577, Ser-587, Ser-590, and Ser-597. Basic and acidic residues predominate over residues 568–579 (EGNKSNKSGSED). Residues 597–606 (SVRKRRVRKE) show a composition bias toward basic residues.

This sequence belongs to the calreticulin family. Interacts with PPIB and PDILT. Interacts with ADAM2.

It is found in the endoplasmic reticulum membrane. In terms of biological role, functions during spermatogenesis as a chaperone for a range of client proteins that are important for sperm adhesion onto the egg zona pellucida and for subsequent penetration of the zona pellucida. Required for normal sperm migration from the uterus into the oviduct. Required for normal male fertility. Binds calcium ions. This Bos taurus (Bovine) protein is Calmegin (CLGN).